Here is a 345-residue protein sequence, read N- to C-terminus: Anthranilate phosphoribosyltransferase (345 aa).

Residues G84, 87 to 88 (GD), T92, 94 to 97 (NIST), 112 to 120 (KHGNRSVSS), and S124 contribute to the 5-phospho-alpha-D-ribose 1-diphosphate site. G84 contributes to the anthranilate binding site. Residue S96 coordinates Mg(2+). Anthranilate is bound at residue N115. Position 170 (R170) interacts with anthranilate. Mg(2+) contacts are provided by D229 and E230.

This sequence belongs to the anthranilate phosphoribosyltransferase family. Homodimer. It depends on Mg(2+) as a cofactor.

The enzyme catalyses N-(5-phospho-beta-D-ribosyl)anthranilate + diphosphate = 5-phospho-alpha-D-ribose 1-diphosphate + anthranilate. Its pathway is amino-acid biosynthesis; L-tryptophan biosynthesis; L-tryptophan from chorismate: step 2/5. Functionally, catalyzes the transfer of the phosphoribosyl group of 5-phosphorylribose-1-pyrophosphate (PRPP) to anthranilate to yield N-(5'-phosphoribosyl)-anthranilate (PRA). The polypeptide is Anthranilate phosphoribosyltransferase (Xanthomonas oryzae pv. oryzae (strain MAFF 311018)).